Reading from the N-terminus, the 80-residue chain is Translation initiation factor IF-1, chloroplastic (80 aa).

The S1-like domain occupies 1–72 (MKKQNLIDME…TKGRIIYRLR (72 aa)).

This sequence belongs to the IF-1 family. As to quaternary structure, component of the 30S ribosomal translation pre-initiation complex which assembles on the 30S ribosome in the order IF-2 and IF-3, IF-1 and N-formylmethionyl-tRNA(fMet); mRNA recruitment can occur at any time during PIC assembly.

The protein resides in the plastid. Its subcellular location is the chloroplast. In terms of biological role, one of the essential components for the initiation of protein synthesis. Stabilizes the binding of IF-2 and IF-3 on the 30S subunit to which N-formylmethionyl-tRNA(fMet) subsequently binds. Helps modulate mRNA selection, yielding the 30S pre-initiation complex (PIC). Upon addition of the 50S ribosomal subunit IF-1, IF-2 and IF-3 are released leaving the mature 70S translation initiation complex. This chain is Translation initiation factor IF-1, chloroplastic, found in Adiantum capillus-veneris (Maidenhair fern).